Reading from the N-terminus, the 132-residue chain is Fatty acid-binding protein, intestinal (132 aa).

Residue A2 is modified to N-acetylalanine. Hexadecanoate-binding residues include W83 and R107. W83 and R107 together coordinate tetradecanoate.

The protein belongs to the calycin superfamily. Fatty-acid binding protein (FABP) family.

The protein localises to the cytoplasm. FABPs are thought to play a role in the intracellular transport of long-chain fatty acids and their acyl-CoA esters. FABP2 is probably involved in triglyceride-rich lipoprotein synthesis. Binds saturated long-chain fatty acids with a high affinity, but binds with a lower affinity to unsaturated long-chain fatty acids. FABP2 may also help maintain energy homeostasis by functioning as a lipid sensor. The protein is Fatty acid-binding protein, intestinal (FABP2) of Bos taurus (Bovine).